The following is a 214-amino-acid chain: Pyridoxine/pyridoxamine 5'-phosphate oxidase (214 aa).

Residues 8–11 (RINY) and lysine 66 each bind substrate. FMN-binding positions include 61–66 (RILLIK), 76–77 (FT), arginine 82, lysine 83, and glutamine 105. Substrate is bound by residues tyrosine 123, arginine 127, and serine 131. Residues 140–141 (QS) and tryptophan 184 each bind FMN. 190 to 192 (RLH) provides a ligand contact to substrate. Residue arginine 194 coordinates FMN.

It belongs to the pyridoxamine 5'-phosphate oxidase family. In terms of assembly, homodimer. Requires FMN as cofactor.

The catalysed reaction is pyridoxamine 5'-phosphate + O2 + H2O = pyridoxal 5'-phosphate + H2O2 + NH4(+). It carries out the reaction pyridoxine 5'-phosphate + O2 = pyridoxal 5'-phosphate + H2O2. It functions in the pathway cofactor metabolism; pyridoxal 5'-phosphate salvage; pyridoxal 5'-phosphate from pyridoxamine 5'-phosphate: step 1/1. The protein operates within cofactor metabolism; pyridoxal 5'-phosphate salvage; pyridoxal 5'-phosphate from pyridoxine 5'-phosphate: step 1/1. Functionally, catalyzes the oxidation of either pyridoxine 5'-phosphate (PNP) or pyridoxamine 5'-phosphate (PMP) into pyridoxal 5'-phosphate (PLP). This Burkholderia vietnamiensis (strain G4 / LMG 22486) (Burkholderia cepacia (strain R1808)) protein is Pyridoxine/pyridoxamine 5'-phosphate oxidase.